Here is a 429-residue protein sequence, read N- to C-terminus: Probable beta-1,3-galactosyl-O-glycosyl-glycoprotein beta-1,6-N-acetylglucosaminyltransferase 7 (429 aa).

Residues 1–8 lie on the Cytoplasmic side of the membrane; the sequence is MSQLRATK. A helical; Signal-anchor for type II membrane protein transmembrane segment spans residues 9-25; it reads PGILVCAAIGIFVFLYL. Residues 26–429 are Extracellular-facing; that stretch reads RNPTSEDPEE…ESHLNRRLNP (404 aa). Cystine bridges form between C53–C205, C139–C354, C160–C187, and C363–C394. N87 carries an N-linked (GlcNAc...) asparagine glycan. N-linked (GlcNAc...) asparagine glycosylation occurs at N272.

The protein belongs to the glycosyltransferase 14 family.

The protein localises to the golgi apparatus membrane. Its pathway is protein modification; protein glycosylation. In terms of biological role, probable glycosyltransferase. The polypeptide is Probable beta-1,3-galactosyl-O-glycosyl-glycoprotein beta-1,6-N-acetylglucosaminyltransferase 7 (Sus scrofa (Pig)).